Here is a 65-residue protein sequence, read N- to C-terminus: DNA-directed RNA polymerase subunit Rpo10 (65 aa).

Residues cysteine 7, cysteine 10, cysteine 44, and cysteine 45 each coordinate Zn(2+).

It belongs to the archaeal Rpo10/eukaryotic RPB10 RNA polymerase subunit family. As to quaternary structure, part of the RNA polymerase complex. Requires Zn(2+) as cofactor.

It is found in the cytoplasm. The catalysed reaction is RNA(n) + a ribonucleoside 5'-triphosphate = RNA(n+1) + diphosphate. DNA-dependent RNA polymerase (RNAP) catalyzes the transcription of DNA into RNA using the four ribonucleoside triphosphates as substrates. This is DNA-directed RNA polymerase subunit Rpo10 from Nanoarchaeum equitans (strain Kin4-M).